A 503-amino-acid polypeptide reads, in one-letter code: Aminoaldehyde dehydrogenase 2, peroxisomal (503 aa).

2 residues coordinate Na(+): Ile-28 and Asp-99. NAD(+)-binding residues include Trp-161 and Lys-185. Position 189 (Leu-189) interacts with Na(+). Residue Ser-239 coordinates NAD(+). The active-site Proton acceptor is the Glu-260. Cys-294 (nucleophile) is an active-site residue. Positions 501–503 (AKL) match the Microbody targeting signal motif.

It belongs to the aldehyde dehydrogenase family. As to quaternary structure, forms homodimers.

Its subcellular location is the peroxisome. It catalyses the reaction 3-aminopropanal + NAD(+) + H2O = beta-alanine + NADH + 2 H(+). It carries out the reaction 4-aminobutanal + NAD(+) + H2O = 4-aminobutanoate + NADH + 2 H(+). The enzyme catalyses 4-guanidinobutanal + NAD(+) + H2O = 4-guanidinobutanoate + NADH + 2 H(+). Its pathway is amine and polyamine biosynthesis; betaine biosynthesis via choline pathway; betaine from betaine aldehyde: step 1/1. In terms of biological role, dehydrogenase that catalyzes the oxidation of several aminoaldehydes. Metabolizes and detoxifies aldehyde products of polyamine degradation to non-toxic amino acids. Catalyzes the oxidation of 3-aminopropanal to beta-alanine. Catalyzes the oxidation of 4-aminobutanal to 4-aminobutanoate. Catalyzes the oxidation of 4-guanidinobutanal to 4-guanidinobutanoate. The chain is Aminoaldehyde dehydrogenase 2, peroxisomal from Pisum sativum (Garden pea).